The chain runs to 72 residues: UPF0270 protein YheU (72 aa).

It belongs to the UPF0270 family.

The polypeptide is UPF0270 protein YheU (Escherichia fergusonii (strain ATCC 35469 / DSM 13698 / CCUG 18766 / IAM 14443 / JCM 21226 / LMG 7866 / NBRC 102419 / NCTC 12128 / CDC 0568-73)).